Reading from the N-terminus, the 224-residue chain is Heme response regulator HssR (224 aa).

The region spanning 3-116 is the Response regulatory domain; that stretch reads NCLIVDDDKK…ELLFRIKAVL (114 aa). D52 is modified (4-aspartylphosphate). The ompR/PhoB-type DNA-binding region spans 124–222; it reads DNELQLGNLI…VRGQGYRVDQ (99 aa).

Phosphorylated by HssS.

It localises to the cytoplasm. Functionally, member of the two-component regulatory system HssS/HssR involved in intracellular heme homeostasis and tempering of staphylococcal virulence. Phosphorylated HssR binds to a direct repeat sequence within hrtAB promoter and activates the expression of hrtAB, an efflux pump, in response to extracellular heme, hemin, hemoglobin or blood. The chain is Heme response regulator HssR (hssR) from Staphylococcus epidermidis (strain ATCC 12228 / FDA PCI 1200).